A 93-amino-acid polypeptide reads, in one-letter code: Large ribosomal subunit protein uL23cz/uL23cy (93 aa).

This sequence belongs to the universal ribosomal protein uL23 family. As to quaternary structure, part of the 50S ribosomal subunit.

It is found in the plastid. It localises to the chloroplast. Its function is as follows. Binds to 23S rRNA. In Atropa belladonna (Belladonna), this protein is Large ribosomal subunit protein uL23cz/uL23cy (rpl23-A).